The chain runs to 411 residues: Formate-dependent phosphoribosylglycinamide formyltransferase (411 aa).

Residue 25–26 (EL) participates in N(1)-(5-phospho-beta-D-ribosyl)glycinamide binding. ATP contacts are provided by residues R118, K159, 164-169 (SSGAGQ), 199-202 (EQYI), and E207. One can recognise an ATP-grasp domain in the interval 123–318 (TFAHDKLGLP…EFDLHARAIL (196 aa)). 2 residues coordinate Mg(2+): E277 and E289. N(1)-(5-phospho-beta-D-ribosyl)glycinamide-binding positions include D296, K366, and 373 to 374 (RR).

The protein belongs to the PurK/PurT family. As to quaternary structure, homodimer.

It catalyses the reaction N(1)-(5-phospho-beta-D-ribosyl)glycinamide + formate + ATP = N(2)-formyl-N(1)-(5-phospho-beta-D-ribosyl)glycinamide + ADP + phosphate + H(+). The protein operates within purine metabolism; IMP biosynthesis via de novo pathway; N(2)-formyl-N(1)-(5-phospho-D-ribosyl)glycinamide from N(1)-(5-phospho-D-ribosyl)glycinamide (formate route): step 1/1. Its function is as follows. Involved in the de novo purine biosynthesis. Catalyzes the transfer of formate to 5-phospho-ribosyl-glycinamide (GAR), producing 5-phospho-ribosyl-N-formylglycinamide (FGAR). Formate is provided by PurU via hydrolysis of 10-formyl-tetrahydrofolate. In Corynebacterium jeikeium (strain K411), this protein is Formate-dependent phosphoribosylglycinamide formyltransferase.